Consider the following 464-residue polypeptide: Trigger factor (464 aa).

The PPIase FKBP-type domain maps to 162–243 (GDFVSIDLSA…VKSVKERELP (82 aa)). The tract at residues 431-464 (IDTSEFFGKRPSGDGAADEDADQADESTTADAGE) is disordered. Positions 446–455 (AADEDADQAD) are enriched in acidic residues.

It belongs to the FKBP-type PPIase family. Tig subfamily.

It is found in the cytoplasm. It catalyses the reaction [protein]-peptidylproline (omega=180) = [protein]-peptidylproline (omega=0). Its function is as follows. Involved in protein export. Acts as a chaperone by maintaining the newly synthesized protein in an open conformation. Functions as a peptidyl-prolyl cis-trans isomerase. The protein is Trigger factor of Mycobacterium avium (strain 104).